A 413-amino-acid chain; its full sequence is Protein MANNAN SYNTHESIS-RELATED (413 aa).

At 1–5 (MNSME) the chain is on the cytoplasmic side. The chain crosses the membrane as a helical; Signal-anchor for type II membrane protein span at residues 6 to 26 (IRQAFAGLLTLSMFIMLGNMI). At 27-413 (KKDHFDYPAE…KNHLAYKCFC (387 aa)) the chain is on the lumenal side. Asn207 is a glycosylation site (N-linked (GlcNAc...) asparagine). Residue 255–257 (DLR) participates in substrate binding.

Belongs to the glycosyltransferase GT106 family. In terms of tissue distribution, highly and specifically expressed in the endosperm.

Its subcellular location is the golgi apparatus membrane. The protein operates within glycan biosynthesis. Functionally, glycosyltransferase involved in mannan biosynthesis. The sequence is that of Protein MANNAN SYNTHESIS-RELATED from Trigonella foenum-graecum (Fenugreek).